The primary structure comprises 219 residues: MIIEARNIRKSFGSLEVLKGVDIAIDRGEIVSIVGTSGAGKTTLLQILGTLDRADSGELRIDGTDIMGMNNRKQAEFRNRRLGFIFQFHRLLPEFTALENVMIPALIAGKSRKEASCEAERLLSDLNLSDRASHKPSELSGGEKQRIAVARALVNHPAIILADEPSGSLDSAHKEELHALFFRLCREMGQTFLIVTHDEKLAAGTDRILHMRDGLLFSE.

Residues 3–219 (IEARNIRKSF…HMRDGLLFSE (217 aa)) form the ABC transporter domain. 35 to 42 (GTSGAGKT) provides a ligand contact to ATP.

Belongs to the ABC transporter superfamily. Lipoprotein translocase (TC 3.A.1.125) family. In terms of assembly, the complex is composed of two ATP-binding proteins (LolD) and two transmembrane proteins (LolC and LolE).

It localises to the cell inner membrane. Part of the ABC transporter complex LolCDE involved in the translocation of mature outer membrane-directed lipoproteins, from the inner membrane to the periplasmic chaperone, LolA. Responsible for the formation of the LolA-lipoprotein complex in an ATP-dependent manner. The sequence is that of Lipoprotein-releasing system ATP-binding protein LolD from Porphyromonas gingivalis (strain ATCC BAA-308 / W83).